The primary structure comprises 228 residues: Claudin-10 (228 aa).

Residues 1–21 (MASTASEIIAFMVSISGWVLV) traverse the membrane as a helical segment. Over 22–80 (SSTLPTDYWKVSTIDGTVITTATYWANLWKACVTDSTGVSNCKDFPSMLALDGYIQACR) the chain is Extracellular. The chain crosses the membrane as a helical span at residues 81–101 (GLMIAAVSLGFFGSIFALFGM). At 102 to 115 (KCTKVGGSDKAKAK) the chain is on the cytoplasmic side. The helical transmembrane segment at 116-136 (IACLAGIVFILSGLCSMTGCS) threads the bilayer. The Extracellular segment spans residues 137–160 (LYANKITTEFFDPLFVEQKYELGA). A helical transmembrane segment spans residues 161-181 (ALFIGWAGASLCIIGGVIFCF). The Cytoplasmic portion of the chain corresponds to 182-228 (SISDNNKTPRYTYNGATSVMSSRTKYHGGEDFKTTNPSKQFDKNAYV).

Belongs to the claudin family. In terms of assembly, can form homodimers both in trans (interaction between CLDN10 molecules in opposing membranes) and in cis (interaction between CLDN10 molecules within one membrane). As to quaternary structure, interacts with CLDN19. In terms of tissue distribution, expressed in the kidney, eccrine sweat glands and in all layers of the epidermis. In the kidney, it is detected in the thick ascending limb of Henle's loop (TAL). In the sweat glands, it is expressed in cells from secretory portions, corresponding to the clear cells.

It localises to the cell junction. The protein resides in the tight junction. Its subcellular location is the cell membrane. The enzyme catalyses Na(+)(in) = Na(+)(out). It carries out the reaction Li(+)(in) = Li(+)(out). The catalysed reaction is K(+)(in) = K(+)(out). It catalyses the reaction Rb(+)(in) = Rb(+)(out). The enzyme catalyses Cs(+)(in) = Cs(+)(out). It carries out the reaction NH4(+)(in) = NH4(+)(out). The catalysed reaction is methylamine(out) = methylamine(in). It catalyses the reaction Mg(2+)(in) = Mg(2+)(out). The enzyme catalyses Ca(2+)(in) = Ca(2+)(out). It carries out the reaction Sr(2+)(in) = Sr(2+)(out). The catalysed reaction is chloride(in) = chloride(out). It catalyses the reaction nitrate(in) = nitrate(out). Forms paracellular channels: polymerizes in tight junction strands with cation- and anion-selective channels through the strands, conveying epithelial permeability in a process known as paracellular tight junction permeability. Its function is as follows. Forms cation-selective paracellular channels. In sweat glands and in the thick ascending limb (TAL) of Henle's loop in kidney, it controls paracellular sodium permeability which is essential for proper sweat production and renal function. In terms of biological role, forms anion-selective paracellular channels. In renal proximal tubules, it conveys selective chloride over hydrogencarbonate anion permeability which is required for renal chloride reabsorption and salt homeostasis. The protein is Claudin-10 of Homo sapiens (Human).